The chain runs to 490 residues: Probable cytosol aminopeptidase (490 aa).

Residues K262 and D267 each contribute to the Mn(2+) site. The active site involves K274. The Mn(2+) site is built by D285, D344, and E346. R348 is a catalytic residue.

The protein belongs to the peptidase M17 family. Mn(2+) serves as cofactor.

It is found in the cytoplasm. It carries out the reaction Release of an N-terminal amino acid, Xaa-|-Yaa-, in which Xaa is preferably Leu, but may be other amino acids including Pro although not Arg or Lys, and Yaa may be Pro. Amino acid amides and methyl esters are also readily hydrolyzed, but rates on arylamides are exceedingly low.. It catalyses the reaction Release of an N-terminal amino acid, preferentially leucine, but not glutamic or aspartic acids.. Its function is as follows. Presumably involved in the processing and regular turnover of intracellular proteins. Catalyzes the removal of unsubstituted N-terminal amino acids from various peptides. This Mannheimia succiniciproducens (strain KCTC 0769BP / MBEL55E) protein is Probable cytosol aminopeptidase.